A 402-amino-acid chain; its full sequence is 1-deoxy-D-xylulose 5-phosphate reductoisomerase (402 aa).

NADPH-binding residues include threonine 21, glycine 22, serine 23, isoleucine 24, glycine 47, asparagine 50, and asparagine 127. Lysine 128 contributes to the 1-deoxy-D-xylulose 5-phosphate binding site. An NADPH-binding site is contributed by glutamate 129. Residue aspartate 151 coordinates Mn(2+). 4 residues coordinate 1-deoxy-D-xylulose 5-phosphate: serine 152, glutamate 153, serine 177, and histidine 200. Position 153 (glutamate 153) interacts with Mn(2+). Glycine 206 lines the NADPH pocket. 1-deoxy-D-xylulose 5-phosphate-binding residues include serine 213, asparagine 218, lysine 219, and glutamate 222. Glutamate 222 serves as a coordination point for Mn(2+).

Belongs to the DXR family. Requires Mg(2+) as cofactor. Mn(2+) is required as a cofactor.

It catalyses the reaction 2-C-methyl-D-erythritol 4-phosphate + NADP(+) = 1-deoxy-D-xylulose 5-phosphate + NADPH + H(+). It functions in the pathway isoprenoid biosynthesis; isopentenyl diphosphate biosynthesis via DXP pathway; isopentenyl diphosphate from 1-deoxy-D-xylulose 5-phosphate: step 1/6. Catalyzes the NADPH-dependent rearrangement and reduction of 1-deoxy-D-xylulose-5-phosphate (DXP) to 2-C-methyl-D-erythritol 4-phosphate (MEP). This is 1-deoxy-D-xylulose 5-phosphate reductoisomerase from Mycobacterium ulcerans (strain Agy99).